A 423-amino-acid chain; its full sequence is MDTVSRQLFEKAQAVIPGGVNSPVRACHNVDSQPLFIAEAHGCHLTDVDGRQYIDFVLSWGPMILGHDEPSVTRAVCDAAHRGTSYGAPCPDEVLLAEAVVAAMPSLEMVRMVNSGTEATMSALRLARAATRRDKVLKFVGCYHGHADPFLAAAGSGLATFSIPGTPGVPAAVVADTLLAPYNDLEAVKECFARHGESIAAIIVEPVAANMGLVLPKPGFLEGLRAICDQYESLLIFDEVITGFRAAFGGAQARFKVDPDLTTFGKIIGGGLPVGAFGGKRRYMELIAPRGGVYQAGTLSGNPLAMAAGLATLGILRKADYDGLENRTRAFAYSMRDIIAAKGVPLQMPTLASMFCPYFSEHEVTDFADAQKCDQKLFTSFYKQMRAQGIYLAPSGYETGMVSFAHTDEDFNRALDAARKVMF.

Residue lysine 266 is modified to N6-(pyridoxal phosphate)lysine.

Belongs to the class-III pyridoxal-phosphate-dependent aminotransferase family. HemL subfamily. As to quaternary structure, homodimer. It depends on pyridoxal 5'-phosphate as a cofactor.

It is found in the cytoplasm. It catalyses the reaction (S)-4-amino-5-oxopentanoate = 5-aminolevulinate. The protein operates within porphyrin-containing compound metabolism; protoporphyrin-IX biosynthesis; 5-aminolevulinate from L-glutamyl-tRNA(Glu): step 2/2. This chain is Glutamate-1-semialdehyde 2,1-aminomutase, found in Desulfovibrio desulfuricans (strain ATCC 27774 / DSM 6949 / MB).